Consider the following 555-residue polypeptide: Formate--tetrahydrofolate ligase (555 aa).

Residue 65–72 (TPAGEGKS) coordinates ATP.

Belongs to the formate--tetrahydrofolate ligase family.

The enzyme catalyses (6S)-5,6,7,8-tetrahydrofolate + formate + ATP = (6R)-10-formyltetrahydrofolate + ADP + phosphate. It participates in one-carbon metabolism; tetrahydrofolate interconversion. The polypeptide is Formate--tetrahydrofolate ligase (Staphylococcus haemolyticus (strain JCSC1435)).